The sequence spans 373 residues: 3-dehydroquinate synthase (373 aa).

NAD(+) is bound by residues 74-79 (DAEAGK), 108-112 (GAATD), 132-133 (TT), lysine 145, lysine 154, and 172-175 (TLET). Glutamate 187, histidine 250, and histidine 266 together coordinate Zn(2+).

The protein belongs to the sugar phosphate cyclases superfamily. Dehydroquinate synthase family. Co(2+) is required as a cofactor. Zn(2+) serves as cofactor. It depends on NAD(+) as a cofactor.

It localises to the cytoplasm. It catalyses the reaction 7-phospho-2-dehydro-3-deoxy-D-arabino-heptonate = 3-dehydroquinate + phosphate. It participates in metabolic intermediate biosynthesis; chorismate biosynthesis; chorismate from D-erythrose 4-phosphate and phosphoenolpyruvate: step 2/7. Catalyzes the conversion of 3-deoxy-D-arabino-heptulosonate 7-phosphate (DAHP) to dehydroquinate (DHQ). The chain is 3-dehydroquinate synthase from Nocardia farcinica (strain IFM 10152).